Reading from the N-terminus, the 424-residue chain is Zinc metalloproteinase-disintegrin-like brevilysin H2a (424 aa).

The residue at position 1 (Gln-1) is a Pyrrolidone carboxylic acid. A Peptidase M12B domain is found at 9–207 (RYVKLAIVAD…YKPQCILNEP (199 aa)). Asn-69 carries an N-linked (GlcNAc...) asparagine glycan. Asp-96 is a Ca(2+) binding site. Cystine bridges form between Cys-120-Cys-202, Cys-164-Cys-186, and Cys-166-Cys-169. His-145 serves as a coordination point for Zn(2+). Residue Glu-146 is part of the active site. Residues His-149 and His-155 each contribute to the Zn(2+) site. A glycan (N-linked (GlcNAc...) asparagine) is linked at Asn-185. Ca(2+) is bound by residues Cys-202, Asn-205, Val-217, Asn-220, Leu-222, Glu-224, Glu-227, and Asp-230. A Disintegrin domain is found at 215 to 301 (PPVCGNELLE…DCPTDDLQRN (87 aa)). Disulfide bonds link Cys-218/Cys-247, Cys-229/Cys-242, Cys-231/Cys-237, Cys-241/Cys-264, Cys-255/Cys-261, Cys-260/Cys-286, Cys-273/Cys-293, Cys-280/Cys-312, Cys-305/Cys-317, Cys-324/Cys-374, Cys-339/Cys-385, Cys-352/Cys-362, Cys-369/Cys-411, and Cys-405/Cys-417. The short motif at 279 to 281 (DCD) is the D/ECD-tripeptide element. Ca(2+) contacts are provided by Asp-281, Glu-284, and Asp-296. The N-linked (GlcNAc...) asparagine glycan is linked to Asn-331.

It belongs to the venom metalloproteinase (M12B) family. P-III subfamily. P-IIIa sub-subfamily. As to quaternary structure, monomer. Zn(2+) serves as cofactor. Glycosylated. In terms of tissue distribution, expressed by the venom gland.

The protein localises to the secreted. Its activity is regulated as follows. Its proteolytic activity is inhibited by EDTA, TPEN, 1,10-phenanthroline, and some thiol compounds, but is enhanced by alkaline earth metal ions (Mg2+, Ca2+, Sr2+, and Ba2+). Its activity is not modulated by urea (4 M). Non-hemorrhagic metalloproteinase that degrades fibrinogen. The alpha chain (FGA) is rapidly degraded, the beta chain (FGB) is degraded very slowly, while the gamma chain is left intact. Shows a prefential cleavage at X-Leu bonds. Cleaves insulin B chain at '29-His-|-Leu-30', '33-Ser-|-His-34', '38-Ala-|-Leu-39' and '40-Tyr-|-Leu-41' bonds. The chain is Zinc metalloproteinase-disintegrin-like brevilysin H2a from Gloydius brevicauda (Korean slamosa snake).